Here is a 142-residue protein sequence, read N- to C-terminus: MAKKVQAYVKLQVAAGMANPSPPVGPALGQQGVNIMEFCKAFNARTESLEKGLPIPVVITVYADRSFTFVTKTPPAAVLLKKAAGIKSGSGKPNKDKVGKVTLDQVRQIAETKAADMTGATIETKMKSIAGTARSMGLVVEE.

Belongs to the universal ribosomal protein uL11 family. As to quaternary structure, part of the ribosomal stalk of the 50S ribosomal subunit. Interacts with L10 and the large rRNA to form the base of the stalk. L10 forms an elongated spine to which L12 dimers bind in a sequential fashion forming a multimeric L10(L12)X complex. In terms of processing, one or more lysine residues are methylated.

Its function is as follows. Forms part of the ribosomal stalk which helps the ribosome interact with GTP-bound translation factors. This Haemophilus influenzae (strain 86-028NP) protein is Large ribosomal subunit protein uL11.